The following is a 567-amino-acid chain: Probable diguanylate cyclase DgcQ (567 aa).

The next 2 helical transmembrane spans lie at 20–40 (FGPG…STLL) and 357–377 (IALT…WGVI). The region spanning 425–560 (QPFSVIQLDL…GRNRICASDA (136 aa)) is the GGDEF domain. Mg(2+) is bound at residue D433. N441, H446, and D450 together coordinate substrate. E476 contacts Mg(2+). E476 acts as the Proton acceptor in catalysis.

Homodimer. Mg(2+) serves as cofactor.

It is found in the cell inner membrane. The catalysed reaction is 2 GTP = 3',3'-c-di-GMP + 2 diphosphate. It functions in the pathway glycan metabolism; bacterial cellulose biosynthesis. It participates in purine metabolism; 3',5'-cyclic di-GMP biosynthesis. Functionally, catalyzes the synthesis of cyclic-di-GMP (c-di-GMP) via the condensation of 2 GTP molecules. Cyclic-di-GMP is a second messenger which controls cell surface-associated traits in bacteria. Involved in the regulation of cellulose production. In Salmonella typhi, this protein is Probable diguanylate cyclase DgcQ.